The following is a 319-amino-acid chain: Tetrahydromethanopterin S-methyltransferase subunit H (319 aa).

The protein belongs to the MtrH family. The complex is composed of 8 subunits; MtrA, MtrB, MtrC, MtrD, MtrE, MtrF, MtrG and MtrH.

The catalysed reaction is 5-methyl-5,6,7,8-tetrahydromethanopterin + coenzyme M + 2 Na(+)(in) = 5,6,7,8-tetrahydromethanopterin + methyl-coenzyme M + 2 Na(+)(out). It participates in one-carbon metabolism; methanogenesis from CO(2); methyl-coenzyme M from 5,10-methylene-5,6,7,8-tetrahydromethanopterin: step 2/2. Part of a complex that catalyzes the formation of methyl-coenzyme M and tetrahydromethanopterin from coenzyme M and methyl-tetrahydromethanopterin. This is an energy-conserving, sodium-ion translocating step. MtrH catalyzes the transfer of the methyl group from methyl-tetrahydromethanopterin to the corrinoid prosthetic group of MtrA. This is Tetrahydromethanopterin S-methyltransferase subunit H from Methanococcus maripaludis (strain DSM 14266 / JCM 13030 / NBRC 101832 / S2 / LL).